Consider the following 91-residue polypeptide: Islet amyloid polypeptide (91 aa).

An N-terminal signal peptide occupies residues 1–22; it reads MGILKLPVVLIVLCVALNHLEG. The propeptide occupies 23-33; it reads GGKPTESHQME. A disulfide bridge connects residues Cys-37 and Cys-42. Residue Tyr-72 is modified to Tyrosine amide. Positions 78 to 91 are excised as a propeptide; it reads VEILKREPLSYLPI.

Belongs to the calcitonin family. As to quaternary structure, can form homodimers. Interacts with IDE and INS. Interaction with INS inhibits homodimerization and fibril formation.

The protein localises to the secreted. Its function is as follows. Amylin/IAPP is a glucoregulatory peptide hormone that plays an important role in the regulation of energy homeostasis. Selectively inhibits insulin-stimulated glucose utilization and glycogen deposition in muscle, while not affecting adipocyte glucose metabolism. IAPP function is mediated by the CALCR-RAMPs (AMYRs) receptor complexes. Amylin can also bind CALCR receptor in the absence of RAMPs, although it is more selective for AMYRs. The polypeptide is Islet amyloid polypeptide (IAPP) (Bos taurus (Bovine)).